Here is a 553-residue protein sequence, read N- to C-terminus: Dihydroxy-acid dehydratase (553 aa).

A Mg(2+)-binding site is contributed by D78. Position 119 (C119) interacts with [2Fe-2S] cluster. The Mg(2+) site is built by D120 and K121. K121 bears the N6-carboxylysine mark. C193 provides a ligand contact to [2Fe-2S] cluster. E441 is a binding site for Mg(2+). S467 (proton acceptor) is an active-site residue.

This sequence belongs to the IlvD/Edd family. As to quaternary structure, homodimer. [2Fe-2S] cluster serves as cofactor. The cofactor is Mg(2+).

The enzyme catalyses (2R)-2,3-dihydroxy-3-methylbutanoate = 3-methyl-2-oxobutanoate + H2O. It carries out the reaction (2R,3R)-2,3-dihydroxy-3-methylpentanoate = (S)-3-methyl-2-oxopentanoate + H2O. It participates in amino-acid biosynthesis; L-isoleucine biosynthesis; L-isoleucine from 2-oxobutanoate: step 3/4. The protein operates within amino-acid biosynthesis; L-valine biosynthesis; L-valine from pyruvate: step 3/4. Its function is as follows. Functions in the biosynthesis of branched-chain amino acids. Catalyzes the dehydration of (2R,3R)-2,3-dihydroxy-3-methylpentanoate (2,3-dihydroxy-3-methylvalerate) into 2-oxo-3-methylpentanoate (2-oxo-3-methylvalerate) and of (2R)-2,3-dihydroxy-3-methylbutanoate (2,3-dihydroxyisovalerate) into 2-oxo-3-methylbutanoate (2-oxoisovalerate), the penultimate precursor to L-isoleucine and L-valine, respectively. This is Dihydroxy-acid dehydratase from Citrifermentans bemidjiense (strain ATCC BAA-1014 / DSM 16622 / JCM 12645 / Bem) (Geobacter bemidjiensis).